A 122-amino-acid chain; its full sequence is Large ribosomal subunit protein uL14 (122 aa).

It belongs to the universal ribosomal protein uL14 family. In terms of assembly, part of the 50S ribosomal subunit. Forms a cluster with proteins L3 and L19. In the 70S ribosome, L14 and L19 interact and together make contacts with the 16S rRNA in bridges B5 and B8.

In terms of biological role, binds to 23S rRNA. Forms part of two intersubunit bridges in the 70S ribosome. The protein is Large ribosomal subunit protein uL14 of Chromobacterium violaceum (strain ATCC 12472 / DSM 30191 / JCM 1249 / CCUG 213 / NBRC 12614 / NCIMB 9131 / NCTC 9757 / MK).